Consider the following 194-residue polypeptide: Cytochrome c biogenesis ATP-binding export protein CcmA (194 aa).

An ABC transporter domain is found at 5–194 (LALDGVACIR…LDELVMGVLA (190 aa)). 37-44 (GPNGAGKS) contacts ATP.

The protein belongs to the ABC transporter superfamily. CcmA exporter (TC 3.A.1.107) family. As to quaternary structure, the complex is composed of two ATP-binding proteins (CcmA) and two transmembrane proteins (CcmB).

The protein localises to the cell inner membrane. It catalyses the reaction heme b(in) + ATP + H2O = heme b(out) + ADP + phosphate + H(+). In terms of biological role, part of the ABC transporter complex CcmAB involved in the biogenesis of c-type cytochromes; once thought to export heme, this seems not to be the case, but its exact role is uncertain. Responsible for energy coupling to the transport system. The protein is Cytochrome c biogenesis ATP-binding export protein CcmA of Sphingopyxis alaskensis (strain DSM 13593 / LMG 18877 / RB2256) (Sphingomonas alaskensis).